A 525-amino-acid polypeptide reads, in one-letter code: tRNA-splicing endonuclease subunit Sen54 (525 aa).

Position 1 is an N-acetylmethionine (Met-1). Residues 1–46 (MEPEPEPGSVEVPAGRVLSASELRAARSRSQKLPQRSHGPKDFLPD) are disordered. Residues 7–23 (PGSVEVPAGRVLSASEL) show a composition bias toward low complexity. Ser-178 carries the phosphoserine modification. Phosphotyrosine is present on Tyr-180. A compositionally biased stretch (low complexity) spans 220–232 (LPPVSLAASSSPA). The tract at residues 220–273 (LPPVSLAASSSPACDQSSQYPEEKSQDSSPRQGSELPLQFLGSSEPCSDLARED) is disordered.

This sequence belongs to the SEN54 family. As to quaternary structure, tRNA splicing endonuclease is a heterotetramer composed of TSEN2, TSEN15, TSEN34/LENG5 and TSEN54. tRNA splicing endonuclease complex also contains proteins of the pre-mRNA 3'-end processing machinery such as CLP1, CPSF1, CPSF4 and CSTF2.

The protein resides in the nucleus. Its subcellular location is the nucleolus. Functionally, non-catalytic subunit of the tRNA-splicing endonuclease complex, a complex responsible for identification and cleavage of the splice sites in pre-tRNA. It cleaves pre-tRNA at the 5' and 3' splice sites to release the intron. The products are an intron and two tRNA half-molecules bearing 2',3' cyclic phosphate and 5'-OH termini. There are no conserved sequences at the splice sites, but the intron is invariably located at the same site in the gene, placing the splice sites an invariant distance from the constant structural features of the tRNA body. The tRNA splicing endonuclease is also involved in mRNA processing via its association with pre-mRNA 3'-end processing factors, establishing a link between pre-tRNA splicing and pre-mRNA 3'-end formation, suggesting that the endonuclease subunits function in multiple RNA-processing events. The chain is tRNA-splicing endonuclease subunit Sen54 (Tsen54) from Mus musculus (Mouse).